A 476-amino-acid polypeptide reads, in one-letter code: Probable periplasmic serine endoprotease DegP-like (476 aa).

The N-terminal stretch at 1–27 is a signal peptide; that stretch reads MSIPRLKSYFTILATVLVLGQAVSAQA. Active-site charge relay system residues include histidine 116, aspartate 146, and serine 219. Substrate is bound by residues 217–219 and 274–278; these read GNS and LGVVI. PDZ domains follow at residues 263–354 and 360–465; these read LKTG…IRDG and ELTV…LRQG.

The protein belongs to the peptidase S1C family.

The protein resides in the periplasm. It carries out the reaction Acts on substrates that are at least partially unfolded. The cleavage site P1 residue is normally between a pair of hydrophobic residues, such as Val-|-Val.. Its function is as follows. Might be efficient in the degradation of transiently denatured and unfolded proteins which accumulate in the periplasm following stress conditions. This chain is Probable periplasmic serine endoprotease DegP-like (mucD), found in Pseudomonas fluorescens (strain ATCC BAA-477 / NRRL B-23932 / Pf-5).